Consider the following 683-residue polypeptide: Actin-binding LIM protein 3 (683 aa).

Methionine 1 bears the N-acetylmethionine mark. LIM zinc-binding domains follow at residues 21–80 (IQCY…LYGT), 80–140 (TRCD…MASS), 149–208 (SHCA…QFGI), and 208–268 (IKCE…ARAE). Residues serine 277, serine 280, serine 282, serine 286, serine 290, serine 337, serine 372, and serine 373 each carry the phosphoserine modification. The tract at residues 372 to 472 (SSPGYIDSPT…EDISQTSKYS (101 aa)) is disordered. Tyrosine 376 bears the Phosphotyrosine mark. A phosphoserine mark is found at serine 379 and serine 388. Polar residues-rich tracts occupy residues 380 to 393 (PTYS…TFSR), 406 to 426 (GRSS…TSYQ), and 454 to 471 (STAT…TSKY). Serine 493, serine 503, and serine 504 each carry phosphoserine. Threonine 543 is modified (phosphothreonine). A phosphoserine mark is found at serine 567, serine 576, and serine 607. The region spanning 615 to 683 (MREYKIYPYE…NELKKQARLF (69 aa)) is the HP domain. Residue arginine 631 is modified to Omega-N-methylarginine.

Directly interacts with F-actin and ABRA. Expressed predominantly in heart and brain.

Its subcellular location is the cytoplasm. In terms of biological role, may act as scaffold protein. May stimulate ABRA activity and ABRA-dependent SRF transcriptional activity. The chain is Actin-binding LIM protein 3 (ABLIM3) from Homo sapiens (Human).